Reading from the N-terminus, the 552-residue chain is Scaffold protein (552 aa).

This sequence belongs to the poxviridae protein D13 family. Homotrimer. Self-assembles to form a layer. Interacts with A17 (via N-terminus); this interaction is necessary for D13 association with membranes.

It is found in the membrane. In terms of biological role, scaffold protein which forms a transitory spherical honeycomb lattice providing curvature and rigidity to the convex membrane of crescent and immature virions (IV). This association occurs concomitantly with viral membrane formation. Targeted by the drug rifampicin, which prevents the formation of this lattice, and hence virus morphogenesis. In the presence of rifampicin, irregularly shaped membranes that lack the honeycomb layer accumulate around areas of electron-dense viroplasm. This layer is lost from virions during maturation from IV to mature virion (MV), through the proteolysis of A17 N-terminus. The chain is Scaffold protein from Vertebrata (FPV).